The sequence spans 3164 residues: Protein eyes shut homolog (3164 aa).

The N-terminal stretch at 1 to 21 (MTDKSIIILSLMVFHSSFING) is a signal peptide. N42, N105, N117, and N166 each carry an N-linked (GlcNAc...) asparagine glycan. EGF-like domains follow at residues 170–212 (KQQF…KYCQ), 213–254 (ELDA…KNCS), and 256–292 (IIGQCQPHVCFHGNCSNITSNSFICECDEQFSGPFCE). 9 disulfide bridges follow: C174-C189, C183-C200, C202-C211, C217-C228, C222-C242, C244-C253, C260-C270, C265-C280, and C282-C291. 4 N-linked (GlcNAc...) asparagine glycosylation sites follow: N225, N252, N269, and N272. N-linked (GlcNAc...) asparagine glycosylation is found at N311 and N343. EGF-like domains are found at residues 332-368 (DVSECSLVPCQNGTDCIQISNDVMCICSPIFTDLLCK) and 370-406 (IQTSCESFSLRNNATCKKWEKDYHCSCISGFTEKNCE). Disulfide bonds link C336–C347, C341–C356, C358–C367, C374–C385, and C396–C405. N-linked (GlcNAc...) asparagine glycosylation is present at N382. Residues N506, N521, and N566 are each glycosylated (N-linked (GlcNAc...) asparagine). The EGF-like 6 domain maps to 567-602 (TTDDQENECQHEAICKDEINRPRCSCSLSYIGRLCV). Disulfide bonds link C575–C590 and C592–C601. N-linked (GlcNAc...) asparagine glycosylation is found at N611 and N654. Residues 643–679 (DTEDCKSVSCKNGTTSIHLRGYFFCKCVPGFKGTQRE) enclose the EGF-like 7 domain. Cystine bridges form between C652/C667, C685/C696, C690/C705, C707/C719, C737/C748, and C742/C757. Residues 681 to 720 (DIDECASHPCKNGATCIDQPGNYFCQCVPPFKVVDGFSCL) enclose the EGF-like 8; calcium-binding domain. An EGF-like 9; calcium-binding domain is found at 733 to 769 (DIDDCILNACEHNSTCKDLHLSYQCVCLSGWEGNFSE). 5 N-linked (GlcNAc...) asparagine glycosylation sites follow: N745, N766, N782, N783, and N805. One can recognise an EGF-like 10; calcium-binding domain in the interval 771-807 (ESNECKMNPCKNNSTCIDLYKSYRCECTSGWTGQNCS). 33 disulfides stabilise this stretch: C775–C786, C780–C795, C797–C806, C813–C824, C818–C835, C837–C846, C853–C866, C860–C876, C878–C887, C894–C905, C899–C914, C916–C925, C932–C943, C937–C952, C954–C963, C970–C981, C975–C990, C992–C1001, C1008–C1019, C1013–C1028, C1030–C1039, C1046–C1056, C1051–C1065, C1067–C1076, C1083–C1094, C1088–C1103, C1105–C1114, C1121–C1137, C1131–C1147, C1149–C1158, C1165–C1176, C1170–C1185, and C1187–C1196. EGF-like domains are found at residues 809-847 (EINECDSDPCMNGGLCHESTIPGQFVCLCPPLYTGRFCH), 849-888 (RYNPCDLLHNPCRNNSTCLALVDGNQHCICREEFEGKNCE), and 890-926 (DVKECLFLSCQDYGDCEDMVNNFRCICRPGFSGSLCE). Residues N862 and N863 are each glycosylated (N-linked (GlcNAc...) asparagine). One can recognise an EGF-like 14; calcium-binding domain in the interval 928–964 (EINECSSEPCKNNGTCVDLTNRFFCNCEPGYHGPFCE). N-linked (GlcNAc...) asparagine glycosylation is present at N940. The EGF-like 15 domain maps to 966 to 1002 (DVNKCKISPCLDEENCVYRTDGYNCLCAPGYTGINCE). The EGF-like 16; calcium-binding domain occupies 1004–1040 (NLDECLSEPCLHDGVCIDGINHYTCDCKSGFFGTHCE). EGF-like domains lie at 1042-1077 (NANDCLSNPCLHGRCTELINEYPCSCDADGTSTQCK), 1079-1115 (KINDCTSIPCMNEGFCQKSAHGFTCICPRGYTGAYCE), and 1117-1159 (SIDN…QFCE). The EGF-like 20; calcium-binding domain occupies 1161-1197 (NINECSSSPCLHGADCEDHINGYVCKCQPGWSGHHCE). Residues N1509, N1522, N1906, N1941, N1960, and N2033 are each glycosylated (N-linked (GlcNAc...) asparagine). One can recognise a Laminin G-like 1 domain in the interval 1883–2063 (FSCVRYYGDS…AVKNYHINNC (181 aa)). Intrachain disulfides connect C2037–C2063, C2103–C2114, C2108–C2128, and C2130–C2139. The 42-residue stretch at 2099-2140 (APSVCQQDVCHNGGTCHPIFLSRGIVSFQCDCPLHFTGRFCE) folds into the EGF-like 21 domain. The Laminin G-like 2 domain occupies 2145–2339 (LFFPSFNGNS…NIENCHVPWC (195 aa)). N-linked (GlcNAc...) asparagine glycans are attached at residues N2170, N2185, and N2228. 6 disulfide bridges follow: C2308-C2339, C2339-C2350, C2344-C2359, C2375-C2386, C2380-C2396, and C2398-C2407. 2 EGF-like domains span residues 2335 to 2368 (HVPWCAHHLCRNNGTCISDNENLFCECPRLYSGK) and 2371 to 2408 (QFASCENNPCGNGATCVPKSGTDIVCLCPYGRSGPLCT). Residue N2347 is glycosylated (N-linked (GlcNAc...) asparagine). N2412, N2453, N2484, N2506, and N2532 each carry an N-linked (GlcNAc...) asparagine glycan. Residues 2419-2609 (SGTDAFGYTS…PNAGRSVGQC (191 aa)) form the Laminin G-like 3 domain. 3 disulfides stabilise this stretch: C2576–C2609, C2614–C2625, and C2619–C2634. EGF-like domains follow at residues 2610-2646 (HASPCSLMKCGNGGTCIESGTSVYCNCTTGWKGAFCT) and 2648-2689 (TVST…IYCE). N2635 is a glycosylation site (N-linked (GlcNAc...) asparagine). 4 disulfides stabilise this stretch: C2636/C2645, C2652/C2668, C2662/C2677, and C2679/C2688. One can recognise a Laminin G-like 4 domain in the interval 2717-2895 (DPSFRSNELS…AKGGSNVGDC (179 aa)). N2775, N2800, and N2824 each carry an N-linked (GlcNAc...) asparagine glycan. Disulfide bonds link C2868–C2895, C2900–C2911, C2905–C2920, and C2922–C2931. 2 consecutive EGF-like domains span residues 2896–2932 (DGTACGYNTCRNGGECTVNGTTFSCRCLPDWAGNTCN) and 2933–2970 (QSVYCLNNLCLHQSLCIPNQSFSYSCLCTLGWVGRYCE). An N-linked (GlcNAc...) asparagine glycan is attached at N2914. N-linked (GlcNAc...) asparagine glycosylation occurs at N2932. Disulfide bonds link C2937-C2948, C2942-C2958, and C2960-C2969. Residue N2951 is glycosylated (N-linked (GlcNAc...) asparagine). N-linked (GlcNAc...) asparagine glycans are attached at residues N2971, N3006, N3036, N3057, N3073, and N3082. Positions 2975 to 3164 (FSTAKFMGNS…YDGDEQNEVT (190 aa)) constitute a Laminin G-like 5 domain.

It belongs to the EYS family.

Its subcellular location is the cell projection. The protein resides in the cilium. The protein localises to the photoreceptor outer segment. It is found in the cytoplasm. It localises to the cytoskeleton. Its subcellular location is the cilium axoneme. The protein resides in the microtubule organizing center. The protein localises to the centrosome. It is found in the secreted. It localises to the extracellular space. Its subcellular location is the extracellular matrix. The protein resides in the interphotoreceptor matrix. In terms of biological role, required to maintain the integrity of photoreceptor cells. Specifically required for normal morphology of the photoreceptor ciliary pocket, and might thus facilitate protein trafficking between the photoreceptor inner and outer segments via the transition zone. The protein is Protein eyes shut homolog (EYS) of Pongo abelii (Sumatran orangutan).